The chain runs to 141 residues: U-scoloptoxin(17)-Er3a (141 aa).

Residues 1–21 (MKSTFALVFGILMVIAHLSFA) form the signal peptide.

It belongs to the scoloptoxin-17 family. Contains 3 disulfide bonds. In terms of tissue distribution, expressed by the venom gland.

It localises to the secreted. The sequence is that of U-scoloptoxin(17)-Er3a from Ethmostigmus rubripes (Giant centipede).